We begin with the raw amino-acid sequence, 493 residues long: Alpha-amylase-related protein (493 aa).

The N-terminal stretch at 1–19 (MFKFALTLTLCLAGSLSLA) is a signal peptide. Glutamine 20 carries the pyrrolidone carboxylic acid modification. A disulfide bond links cysteine 47 and cysteine 103. Residues asparagine 117, glutamine 168, and aspartate 177 each coordinate Ca(2+). A disulfide bridge connects residues cysteine 156 and cysteine 170. Arginine 205 contacts chloride. Aspartate 207 functions as the Nucleophile in the catalytic mechanism. Residue histidine 211 participates in Ca(2+) binding. Glutamate 244 acts as the Proton donor in catalysis. 2 residues coordinate chloride: asparagine 307 and arginine 342. 3 cysteine pairs are disulfide-bonded: cysteine 375-cysteine 381, cysteine 417-cysteine 440, and cysteine 447-cysteine 459.

It belongs to the glycosyl hydrolase 13 family. In terms of assembly, monomer. Ca(2+) is required as a cofactor. Requires chloride as cofactor.

It is found in the secreted. It carries out the reaction Endohydrolysis of (1-&gt;4)-alpha-D-glucosidic linkages in polysaccharides containing three or more (1-&gt;4)-alpha-linked D-glucose units.. This chain is Alpha-amylase-related protein (Amyrel), found in Drosophila simulans (Fruit fly).